The sequence spans 284 residues: L-ribulose-5-phosphate 3-epimerase UlaE (284 aa).

It belongs to the L-ribulose-5-phosphate 3-epimerase family.

It catalyses the reaction L-ribulose 5-phosphate = L-xylulose 5-phosphate. The protein operates within cofactor degradation; L-ascorbate degradation; D-xylulose 5-phosphate from L-ascorbate: step 3/4. In terms of biological role, catalyzes the isomerization of L-xylulose-5-phosphate to L-ribulose-5-phosphate. Is involved in the anaerobic L-ascorbate utilization. This is L-ribulose-5-phosphate 3-epimerase UlaE from Shigella flexneri.